The following is a 362-amino-acid chain: Histidinol-phosphate aminotransferase 2 (362 aa).

Lys-222 is modified (N6-(pyridoxal phosphate)lysine).

It belongs to the class-II pyridoxal-phosphate-dependent aminotransferase family. Histidinol-phosphate aminotransferase subfamily. As to quaternary structure, homodimer. Pyridoxal 5'-phosphate is required as a cofactor.

The catalysed reaction is L-histidinol phosphate + 2-oxoglutarate = 3-(imidazol-4-yl)-2-oxopropyl phosphate + L-glutamate. It functions in the pathway amino-acid biosynthesis; L-histidine biosynthesis; L-histidine from 5-phospho-alpha-D-ribose 1-diphosphate: step 7/9. This is Histidinol-phosphate aminotransferase 2 from Carboxydothermus hydrogenoformans (strain ATCC BAA-161 / DSM 6008 / Z-2901).